The primary structure comprises 327 residues: ATPase ASNA1 homolog (327 aa).

An ATP-binding site is contributed by 26–33; it reads KGGVGKTT. Residue Asp57 is part of the active site. ATP contacts are provided by Glu238 and Asn265. Zn(2+) contacts are provided by Cys274 and Cys277.

Belongs to the arsA ATPase family. In terms of assembly, homodimer.

It localises to the cytoplasm. Its subcellular location is the endoplasmic reticulum. ATPase required for the post-translational delivery of tail-anchored (TA) proteins to the endoplasmic reticulum. Recognizes and selectively binds the transmembrane domain of TA proteins in the cytosol. This complex then targets to the endoplasmic reticulum by membrane-bound receptors, where the tail-anchored protein is released for insertion. This process is regulated by ATP binding and hydrolysis. ATP binding drives the homodimer towards the closed dimer state, facilitating recognition of newly synthesized TA membrane proteins. ATP hydrolysis is required for insertion. Subsequently, the homodimer reverts towards the open dimer state, lowering its affinity for the membrane-bound receptor, and returning it to the cytosol to initiate a new round of targeting. This is ATPase ASNA1 homolog from Entamoeba histolytica (strain ATCC 30459 / HM-1:IMSS / ABRM).